A 78-amino-acid chain; its full sequence is Large ribosomal subunit protein bL28 (78 aa).

The disordered stretch occupies residues 1–22 (MAKVCQVTGKRPVTGHNVSHAK).

It belongs to the bacterial ribosomal protein bL28 family.

This chain is Large ribosomal subunit protein bL28, found in Saccharophagus degradans (strain 2-40 / ATCC 43961 / DSM 17024).